The following is a 432-amino-acid chain: UPF0597 protein APJL_1638 (432 aa).

This sequence belongs to the UPF0597 family.

This chain is UPF0597 protein APJL_1638, found in Actinobacillus pleuropneumoniae serotype 3 (strain JL03).